The primary structure comprises 165 residues: Regulator of sigma D (165 aa).

The protein belongs to the Rsd/AlgQ family. Interacts with RpoD.

Its subcellular location is the cytoplasm. Binds RpoD and negatively regulates RpoD-mediated transcription activation by preventing the interaction between the primary sigma factor RpoD with the catalytic core of the RNA polymerase and with promoter DNA. May be involved in replacement of the RNA polymerase sigma subunit from RpoD to RpoS during the transition from exponential growth to the stationary phase. This chain is Regulator of sigma D, found in Enterobacter sp. (strain 638).